Here is a 425-residue protein sequence, read N- to C-terminus: Serine--tRNA ligase (425 aa).

T229–E231 provides a ligand contact to L-serine. ATP-binding positions include R259–E261 and V275. E282 serves as a coordination point for L-serine. ATP is bound at residue E349–S352. T384 serves as a coordination point for L-serine.

Belongs to the class-II aminoacyl-tRNA synthetase family. Type-1 seryl-tRNA synthetase subfamily. Homodimer. The tRNA molecule binds across the dimer.

The protein localises to the cytoplasm. The catalysed reaction is tRNA(Ser) + L-serine + ATP = L-seryl-tRNA(Ser) + AMP + diphosphate + H(+). It carries out the reaction tRNA(Sec) + L-serine + ATP = L-seryl-tRNA(Sec) + AMP + diphosphate + H(+). Its pathway is aminoacyl-tRNA biosynthesis; selenocysteinyl-tRNA(Sec) biosynthesis; L-seryl-tRNA(Sec) from L-serine and tRNA(Sec): step 1/1. Functionally, catalyzes the attachment of serine to tRNA(Ser). Is also able to aminoacylate tRNA(Sec) with serine, to form the misacylated tRNA L-seryl-tRNA(Sec), which will be further converted into selenocysteinyl-tRNA(Sec). The chain is Serine--tRNA ligase from Borreliella burgdorferi (strain ATCC 35210 / DSM 4680 / CIP 102532 / B31) (Borrelia burgdorferi).